The following is a 442-amino-acid chain: Meiotically up-regulated gene 191 protein (442 aa).

Residue T361 is modified to Phosphothreonine. Residues 416-429 (RNNPSSGESTTLPQ) are compositionally biased toward polar residues. A disordered region spans residues 416–442 (RNNPSSGESTTLPQPSHGKKDKDCVIS). Basic and acidic residues predominate over residues 433 to 442 (GKKDKDCVIS).

Its subcellular location is the cytoplasm. The protein resides in the nucleus. Has a role in meiosis. This is Meiotically up-regulated gene 191 protein (mug191) from Schizosaccharomyces pombe (strain 972 / ATCC 24843) (Fission yeast).